The sequence spans 382 residues: 26S proteasome non-ATPase regulatory subunit 6 (382 aa).

In terms of domain architecture, PCI spans 186–354 (QFKEASDLYL…GVIETTRSDA (169 aa)).

The protein belongs to the proteasome subunit S10 family.

Its function is as follows. Acts as a regulatory subunit of the 26S proteasome which is involved in the ATP-dependent degradation of ubiquitinated proteins. This chain is 26S proteasome non-ATPase regulatory subunit 6 (psmD6), found in Dictyostelium discoideum (Social amoeba).